The chain runs to 343 residues: Delta(1)-pyrroline-2-carboxylate/Delta(1)-piperideine-2-carboxylate reductase (343 aa).

Catalysis depends on Ser53, which acts as the Charge relay system. His54 acts as the Proton donor in catalysis. Arg58 serves as a coordination point for substrate. 126-130 provides a ligand contact to NADP(+); that stretch reads HFAAL. Thr166 lines the substrate pocket. 184 to 186 is a binding site for NADP(+); it reads DLA. 192 to 193 is a binding site for substrate; it reads HG. Catalysis depends on Asp194, which acts as the Charge relay system. NADP(+)-binding positions include 236–237 and 309–315; these read HK and RLPGDRR.

This sequence belongs to the LDH2/MDH2 oxidoreductase family. Homodimer.

The enzyme catalyses L-pipecolate + NADP(+) = Delta(1)-piperideine-2-carboxylate + NADPH + H(+). It catalyses the reaction L-proline + NADP(+) = 1-pyrroline-2-carboxylate + NADPH + H(+). The catalysed reaction is N-methyl-L-alanine + NADP(+) + H2O = methylamine + pyruvate + NADPH + H(+). Its activity is regulated as follows. Is inhibited by the substrate analog pyrrole-2-carboxylate, and by 2-picolinate. In terms of biological role, catalyzes the reduction of both Delta(1)-pyrroline-2-carboxylate (Pyr2C) and Delta(1)-piperideine-2-carboxylate (Pip2C) to L-proline and L-pipecolate, respectively, using NADPH as the electron donor. Can catalyze the reverse oxidation reactions, albeit at a much lower rate. Is also able to catalyze in vitro the NADPH-dependent formation of N-methylalanine from pyruvate and N-methylamine; can act on other alpha-keto acids and specifically uses methylamine and not ammonia for these reductive amination reactions. Can use NADH instead of NADPH, although with much less efficiency. In Pseudomonas syringae pv. tomato, this protein is Delta(1)-pyrroline-2-carboxylate/Delta(1)-piperideine-2-carboxylate reductase.